The primary structure comprises 771 residues: Leucine-rich repeat and fibronectin type III domain-containing protein 1 (771 aa).

The first 31 residues, 1–31 (MAPGPFSSALLSPPPAALPFLLLLWAGASRG), serve as a signal peptide directing secretion. An LRRNT domain is found at 32-65 (QPCPGRCICQNVAPTLTMLCAKTGLLFVPPAIDR). Residues 32 to 536 (QPCPGRCICQ…LRAHFLGGTM (505 aa)) are Extracellular-facing. LRR repeat units follow at residues 66–87 (RVVE…DFAN), 90–111 (SLVH…AFAD), 114–135 (ALRA…QLRG), 138–159 (NLRH…AFDA), 163–184 (TVED…AVGQ), 187–208 (NLNT…TFVQ), and 211–232 (KLVR…GLFL). N-linked (GlcNAc...) asparagine glycosylation occurs at Asn87. An LRRCT domain is found at 252–298 (NPLHCNCELLWLRRLTREDDLETCATPEHLTDRYFWSIPEEEFLCEP). In terms of domain architecture, Ig-like spans 299-386 (PLITRQAGGR…GEATAPVEVC (88 aa)). The cysteines at positions 321 and 370 are disulfide-linked. Asn343 carries N-linked (GlcNAc...) asparagine glycosylation. The interval 397–422 (PAAPPPLTEPGSSDIATPGRPGANDS) is disordered. Positions 424–520 (AERRLVAAEL…GCVQFTTAGD (97 aa)) constitute a Fibronectin type-III domain. A helical membrane pass occupies residues 537–557 (IIAIGGVIVASVLVFIVLLMI). The Cytoplasmic segment spans residues 558–771 (RYKVYGDGDS…STEWMLESTV (214 aa)). Ser613 and Ser718 each carry phosphoserine. The interval 654-743 (PSEETSGEES…HLDGAGGGAA (90 aa)) is disordered. Residues 719 to 732 (YPRRARRTKRHRST) are compositionally biased toward basic residues. The PDZ-binding motif lies at 768 to 771 (ESTV).

Belongs to the LRFN family. As to quaternary structure, can form heteromeric complexes with LRFN2, LRFN3, LRFN4 and LRFN5. Forms homomeric complexes, but not across cell junctions. Interacts with DLG1, DLG2, DLG3 and DLG4. Interacts with 2 AMPA receptor subunits GRIA1 and GRIA2 and NMDA receptor subunit GRIN1. In terms of processing, glycosylated.

The protein localises to the membrane. The protein resides in the synapse. Its subcellular location is the postsynaptic density membrane. Functionally, promotes neurite outgrowth in hippocampal neurons. Involved in the regulation and maintenance of excitatory synapses. Induces the clustering of excitatory postsynaptic proteins, including DLG4, DLGAP1, GRIA1 and GRIN1. In Homo sapiens (Human), this protein is Leucine-rich repeat and fibronectin type III domain-containing protein 1 (LRFN1).